The sequence spans 397 residues: Elongation factor Tu (397 aa).

Positions 10 to 206 (KPHVNIGTIG…AVDQNIPEPQ (197 aa)) constitute a tr-type G domain. The segment at 19–26 (GHIDHGKT) is G1. 19-26 (GHIDHGKT) serves as a coordination point for GTP. Thr26 contributes to the Mg(2+) binding site. Positions 62 to 66 (GITIS) are G2. Positions 83 to 86 (DCPG) are G3. GTP is bound by residues 83–87 (DCPGH) and 138–141 (NKSD). The G4 stretch occupies residues 138-141 (NKSD). The tract at residues 176-178 (SAL) is G5.

The protein belongs to the TRAFAC class translation factor GTPase superfamily. Classic translation factor GTPase family. EF-Tu/EF-1A subfamily. As to quaternary structure, monomer.

It is found in the cytoplasm. It carries out the reaction GTP + H2O = GDP + phosphate + H(+). Functionally, GTP hydrolase that promotes the GTP-dependent binding of aminoacyl-tRNA to the A-site of ribosomes during protein biosynthesis. This chain is Elongation factor Tu, found in Thermobifida fusca (strain YX).